The following is a 769-amino-acid chain: Ligand-dependent nuclear receptor-interacting factor 1 (769 aa).

Glycyl lysine isopeptide (Lys-Gly) (interchain with G-Cter in SUMO2) cross-links involve residues K259 and K279. Polar residues predominate over residues 378–387; that stretch reads QIDQQNSVSP. The segment at 378–400 is disordered; sequence QIDQQNSVSPDTPVRKDTLQTVS. 3 positions are modified to phosphoserine: S402, S430, and S436. K446 is covalently cross-linked (Glycyl lysine isopeptide (Lys-Gly) (interchain with G-Cter in SUMO2)). S502 carries the phosphoserine modification. Residues 528–562 are disordered; it reads DQEPKIHNEMASTSDKGAQGRNDKKDSQGRSNKAL. A PxVxL motif motif is present at residues 580-584; that stretch reads LRVCL. Phosphoserine is present on S599. K605 is covalently cross-linked (Glycyl lysine isopeptide (Lys-Gly) (interchain with G-Cter in SUMO2)). 2 short sequence motifs (nuclear localization signal) span residues 628–631 and 642–645; these read KKRK. Residue K702 forms a Glycyl lysine isopeptide (Lys-Gly) (interchain with G-Cter in SUMO2) linkage. Residue T732 is modified to Phosphothreonine. The stretch at 740 to 769 forms a coiled coil; sequence IRDEKIRRLKQVLREKEAALEEMRKKMHQK.

Belongs to the LRIF1 family. In terms of assembly, interacts with RARA. Interacts with SMCHD1; leading to recruitment to inactivated chromosome X in females. Interacts (via PxVxL motif) with HP1 (CBX1/HP1-beta, CBX3/HP1-gamma and CBX5/HP1-alpha). In terms of tissue distribution, widely expressed, with the highest expression levels in heart, liver and placenta.

Its subcellular location is the chromosome. It is found in the nucleus matrix. Functionally, together with SMCHD1, involved in chromosome X inactivation in females by promoting the compaction of heterochromatin. Also able to repress the ligand-induced transcriptional activity of retinoic acid receptor alpha (RARA), possibly through direct recruitment of histone deacetylases. Also required for silencing of the DUX4 locus in somatic cells. The protein is Ligand-dependent nuclear receptor-interacting factor 1 of Homo sapiens (Human).